The chain runs to 373 residues: Homoserine O-acetyltransferase (373 aa).

The AB hydrolase-1 domain maps to 46 to 355 (NAILICHPLT…NPNGHDSFLL (310 aa)). Ser-151 serves as the catalytic Nucleophile. Arg-221 serves as a coordination point for substrate. Residues Asp-317 and His-350 contribute to the active site. Asp-351 lines the substrate pocket.

Belongs to the AB hydrolase superfamily. MetX family. Homodimer.

The protein resides in the cytoplasm. It catalyses the reaction L-homoserine + acetyl-CoA = O-acetyl-L-homoserine + CoA. It functions in the pathway amino-acid biosynthesis; L-methionine biosynthesis via de novo pathway; O-acetyl-L-homoserine from L-homoserine: step 1/1. Functionally, transfers an acetyl group from acetyl-CoA to L-homoserine, forming acetyl-L-homoserine. The polypeptide is Homoserine O-acetyltransferase (Zymomonas mobilis subsp. mobilis (strain ATCC 31821 / ZM4 / CP4)).